A 330-amino-acid chain; its full sequence is D-lactate dehydrogenase (330 aa).

NAD(+)-binding positions include 156-157, Asp-176, 206-207, 233-235, and Asp-259; these read RI, VP, and AAR. Arg-235 is a catalytic residue. Glu-264 is a catalytic residue. The active-site Proton donor is the His-296.

Belongs to the D-isomer specific 2-hydroxyacid dehydrogenase family.

The enzyme catalyses (R)-lactate + NAD(+) = pyruvate + NADH + H(+). The protein is D-lactate dehydrogenase (ldhD) of Staphylococcus aureus (strain Mu50 / ATCC 700699).